Consider the following 176-residue polypeptide: 3-hydroxydecanoyl-[acyl-carrier-protein] dehydratase (176 aa).

Residue His71 is part of the active site.

The protein belongs to the thioester dehydratase family. FabA subfamily. In terms of assembly, homodimer.

It is found in the cytoplasm. It carries out the reaction a (3R)-hydroxyacyl-[ACP] = a (2E)-enoyl-[ACP] + H2O. The enzyme catalyses (3R)-hydroxydecanoyl-[ACP] = (2E)-decenoyl-[ACP] + H2O. It catalyses the reaction (2E)-decenoyl-[ACP] = (3Z)-decenoyl-[ACP]. It functions in the pathway lipid metabolism; fatty acid biosynthesis. Its function is as follows. Necessary for the introduction of cis unsaturation into fatty acids. Catalyzes the dehydration of (3R)-3-hydroxydecanoyl-ACP to E-(2)-decenoyl-ACP and then its isomerization to Z-(3)-decenoyl-ACP. Can catalyze the dehydratase reaction for beta-hydroxyacyl-ACPs with saturated chain lengths up to 16:0, being most active on intermediate chain length. In Rhodopseudomonas palustris (strain BisA53), this protein is 3-hydroxydecanoyl-[acyl-carrier-protein] dehydratase.